We begin with the raw amino-acid sequence, 357 residues long: Tribbles homolog 3 (357 aa).

Positions 1-63 (MRASPLAVPA…PAPVHAPDVT (63 aa)) are disordered. The interaction with DDIT3/CHOP stretch occupies residues 1-127 (MRASPLAVPA…GHVARPAEVL (127 aa)). Residues 68-316 (LGPYVLLEPE…SGILLHPWLR (249 aa)) form the Protein kinase domain. The tract at residues 333–357 (DQVVPEGPGLEEAEEEGERDMGLYG) is disordered. Acidic residues predominate over residues 341–350 (GLEEAEEEGE).

The protein belongs to the protein kinase superfamily. CAMK Ser/Thr protein kinase family. Tribbles subfamily. In terms of assembly, interacts with AKT1, AKT2, MAP2K1 and MAP2K7. Interacts with ATF4. Interacts with DDIT3/CHOP and inhibits its interaction with EP300/P300. Interacts with APOBEC3C. Interacts (via N-terminus) with APOBEC3A. Interacts with RELA.

Its subcellular location is the nucleus. Its function is as follows. Inactive protein kinase which acts as a regulator of the integrated stress response (ISR), a process for adaptation to various stress. Inhibits the transcriptional activity of DDIT3/CHOP and is involved in DDIT3/CHOP-dependent cell death during ER stress. May play a role in programmed neuronal cell death but does not appear to affect non-neuronal cells. Acts as a negative feedback regulator of the ATF4-dependent transcription during the ISR: while TRIB3 expression is promoted by ATF4, TRIB3 protein interacts with ATF4 and inhibits ATF4 transcription activity. Disrupts insulin signaling by binding directly to Akt kinases and blocking their activation. May bind directly to and mask the 'Thr-308' phosphorylation site in AKT1. Interacts with the NF-kappa-B transactivator p65 RELA and inhibits its phosphorylation and thus its transcriptional activation activity. Interacts with MAPK kinases and regulates activation of MAP kinases. Can inhibit APOBEC3A editing of nuclear DNA. The sequence is that of Tribbles homolog 3 (TRIB3) from Bos taurus (Bovine).